Reading from the N-terminus, the 190-residue chain is dCTP deaminase, dUMP-forming (190 aa).

DCTP is bound by residues 101–106 (KSSLGR), Asp-119, 127–129 (TLE), Gln-148, Tyr-162, and Gln-174. The active-site Proton donor/acceptor is Glu-129. The tract at residues 161–190 (PYGSSGVGSKYQGQRGPTPSRSYQNFIRST) is disordered. A compositionally biased stretch (polar residues) spans 171–190 (YQGQRGPTPSRSYQNFIRST).

Belongs to the dCTP deaminase family. As to quaternary structure, homotrimer.

It catalyses the reaction dCTP + 2 H2O = dUMP + NH4(+) + diphosphate. It participates in pyrimidine metabolism; dUMP biosynthesis; dUMP from dCTP: step 1/1. Its function is as follows. Bifunctional enzyme that catalyzes both the deamination of dCTP to dUTP and the hydrolysis of dUTP to dUMP without releasing the toxic dUTP intermediate. The chain is dCTP deaminase, dUMP-forming from Mycobacterium ulcerans (strain Agy99).